Reading from the N-terminus, the 26-residue chain is Hemocyanin subunit 3 (26 aa).

It belongs to the tyrosinase family. Hemocyanin subfamily. Hemolymph.

Its subcellular location is the secreted. The protein resides in the extracellular space. Hemocyanins are copper-containing oxygen carriers occurring freely dissolved in the hemolymph of many mollusks and arthropods. The sequence is that of Hemocyanin subunit 3 from Homarus americanus (American lobster).